Reading from the N-terminus, the 1419-residue chain is Multidrug resistance protein 1 (1419 aa).

Residues 1-37 (MGKEQKEKKDGNLSIKEEVEKELNKKSTAELFRKIKN) are r domain; regulates transporter activity. Topologically, residues 1–60 (MGKEQKEKKDGNLSIKEEVEKELNKKSTAELFRKIKNEKISFFLPFKCLPAQHRKLLFIS) are cytoplasmic. The 288-residue stretch at 58–345 (FISFVCAVLS…ILPNITEYMK (288 aa)) folds into the ABC transmembrane type-1 1 domain. The helical transmembrane segment at 61–81 (FVCAVLSGGTLPFFISVFGVI) threads the bilayer. The Vacuolar portion of the chain corresponds to 82–90 (LKNMNLGDD). The helical transmembrane segment at 91–111 (INPIILSLVSIGLVQFILSMI) threads the bilayer. The Cytoplasmic portion of the chain corresponds to 112 to 168 (SSYCMDVITSKILKTLKLEYLRSVFYQDGQFHDNNPGSKLRSDLDFYLEQVSSGIGT). A helical transmembrane segment spans residues 169–189 (KFITIFTYASSFLGLYIWSLI). Residues 190–191 (KN) are Vacuolar-facing. Residues 192–212 (ARLTLCITCVFPLIYVCGVIC) form a helical membrane-spanning segment. The Cytoplasmic segment spans residues 213–275 (NKKVKLNKKT…KYILKANFVE (63 aa)). The helical transmembrane segment at 276-296 (ALHIGLINGLILVSYAFGFWY) threads the bilayer. Residues 297–316 (GTRIIINSATNQYPNNDFNG) are Vacuolar-facing. The helical transmembrane segment at 317 to 337 (ASVISILLGVLISMFMLTIIL) threads the bilayer. Residues 338-788 (PNITEYMKAL…YKEIFSYKKD (451 aa)) are Cytoplasmic-facing. Residues 378–662 (IEFKNVRFHY…NNNNNNNNNK (285 aa)) form the ABC transporter 1 domain. Residues Tyr-387, Thr-389, Arg-390, Ser-415, Cys-417, Gly-418, Lys-419, Ser-420, Thr-421, Gln-462, Lys-562, Ser-564, Gly-566, and Gln-567 each coordinate ATP. Mg(2+) is bound at residue Gln-462. Disordered regions lie at residues 639–665 (ERSDNNNNNNNDDNNNNNNNNNNKINN) and 697–752 (SSNK…TAEN). Composition is skewed to low complexity over residues 643 to 665 (NNNNNNNDDNNNNNNNNNNKINN) and 697 to 715 (SSNKSSNNGNDNGSDNKSS). The segment covering 723 to 749 (GNDADNMNSLSIHENENISNNRNCKNT) has biased composition (polar residues). A helical membrane pass occupies residues 789 to 809 (VTIIFFSILVAGGLYPVFALL). One can recognise an ABC transmembrane type-1 2 domain in the interval 791 to 1083 (IIFFSILVAG…GSYAGKLMSL (293 aa)). Residues 810 to 829 (YARYVSTLFDFANLEYNSNK) lie on the Vacuolar side of the membrane. A helical membrane pass occupies residues 830-850 (YSIYILLIAIAMFISETLKNY). At 851-907 (YNNKIGEKVEKTMKRRLFENILYQEMSFFDQDKNTPGVLSAHINRDVHLLKTGLVNN) the chain is on the cytoplasmic side. 2 consecutive transmembrane segments (helical) span residues 908–928 (IVIFSHFIMLFLVSMVMSFYF) and 929–949 (CPIVAAVLTFIYFINMRVFAV). At 950–1032 (RARLTKSKEI…RIIVNAALWG (83 aa)) the chain is on the cytoplasmic side. Residues 1033 to 1053 (FSQSAQLFINSFAYWFGSFLI) form a helical membrane-spanning segment. Residues 1054 to 1057 (KRGT) lie on the Vacuolar side of the membrane. Residues 1058–1078 (ILVDDFMKSLFTFIFTGSYAG) form a helical membrane-spanning segment. The Cytoplasmic segment spans residues 1079-1419 (KLMSLKGDSE…IYKKYVKLAK (341 aa)). Residues 1126-1416 (VDIKDVNFRY…QDGIYKKYVK (291 aa)) form the ABC transporter 2 domain. The ATP site is built by Tyr-1135, Arg-1138, Thr-1163, Gly-1164, Gly-1166, Lys-1167, Ser-1168, Thr-1169, Gln-1256, Leu-1312, Ser-1313, Gly-1315, and Gln-1316. Ser-1168 provides a ligand contact to Mg(2+). Gln-1256 is a Mg(2+) binding site.

The protein belongs to the ABC transporter superfamily. ABCB family. Multidrug resistance exporter (TC 3.A.1.201) subfamily.

It localises to the vacuole membrane. The enzyme catalyses ATP + H2O + xenobioticSide 1 = ADP + phosphate + xenobioticSide 2.. Functionally, energy-dependent efflux pump responsible for decreased drug accumulation in multidrug-resistant cells. Transports lumefantrine, mefloquine, chloroquine, quinine, quinidine, amodiaquine, piperaquine, dihydroartemisinin and quinacrine. The sequence is that of Multidrug resistance protein 1 from Plasmodium falciparum (isolate 3D7).